The sequence spans 122 residues: Large ribosomal subunit protein uL14 (122 aa).

This sequence belongs to the universal ribosomal protein uL14 family. Part of the 50S ribosomal subunit. Forms a cluster with proteins L3 and L19. In the 70S ribosome, L14 and L19 interact and together make contacts with the 16S rRNA in bridges B5 and B8.

In terms of biological role, binds to 23S rRNA. Forms part of two intersubunit bridges in the 70S ribosome. The chain is Large ribosomal subunit protein uL14 from Ureaplasma parvum serovar 3 (strain ATCC 27815 / 27 / NCTC 11736).